A 244-amino-acid chain; its full sequence is Phosphoadenosine 5'-phosphosulfate reductase (244 aa).

Cys-239 (nucleophile; cysteine thiosulfonate intermediate) is an active-site residue.

It belongs to the PAPS reductase family. CysH subfamily.

It is found in the cytoplasm. The catalysed reaction is [thioredoxin]-disulfide + sulfite + adenosine 3',5'-bisphosphate + 2 H(+) = [thioredoxin]-dithiol + 3'-phosphoadenylyl sulfate. Its pathway is sulfur metabolism; hydrogen sulfide biosynthesis; sulfite from sulfate: step 3/3. Functionally, catalyzes the formation of sulfite from phosphoadenosine 5'-phosphosulfate (PAPS) using thioredoxin as an electron donor. The sequence is that of Phosphoadenosine 5'-phosphosulfate reductase from Buchnera aphidicola subsp. Acyrthosiphon pisum (strain Tuc7).